The sequence spans 364 residues: tRNA 2-selenouridine synthase (364 aa).

The 124-residue stretch at 14–137 (LLADTPLIDV…LRQTAIQATW (124 aa)) folds into the Rhodanese domain. The active-site S-selanylcysteine intermediate is Cys97.

It belongs to the SelU family. As to quaternary structure, monomer.

The enzyme catalyses 5-methylaminomethyl-2-thiouridine(34) in tRNA + selenophosphate + (2E)-geranyl diphosphate + H2O + H(+) = 5-methylaminomethyl-2-selenouridine(34) in tRNA + (2E)-thiogeraniol + phosphate + diphosphate. The catalysed reaction is 5-methylaminomethyl-2-thiouridine(34) in tRNA + (2E)-geranyl diphosphate = 5-methylaminomethyl-S-(2E)-geranyl-thiouridine(34) in tRNA + diphosphate. It carries out the reaction 5-methylaminomethyl-S-(2E)-geranyl-thiouridine(34) in tRNA + selenophosphate + H(+) = 5-methylaminomethyl-2-(Se-phospho)selenouridine(34) in tRNA + (2E)-thiogeraniol. It catalyses the reaction 5-methylaminomethyl-2-(Se-phospho)selenouridine(34) in tRNA + H2O = 5-methylaminomethyl-2-selenouridine(34) in tRNA + phosphate. Involved in the post-transcriptional modification of the uridine at the wobble position (U34) of tRNA(Lys), tRNA(Glu) and tRNA(Gln). Catalyzes the conversion of 2-thiouridine (S2U-RNA) to 2-selenouridine (Se2U-RNA). Acts in a two-step process involving geranylation of 2-thiouridine (S2U) to S-geranyl-2-thiouridine (geS2U) and subsequent selenation of the latter derivative to 2-selenouridine (Se2U) in the tRNA chain. This chain is tRNA 2-selenouridine synthase, found in Salmonella enteritidis.